Consider the following 508-residue polypeptide: Maturase K (508 aa).

Belongs to the intron maturase 2 family. MatK subfamily.

The protein resides in the plastid. It is found in the chloroplast. Usually encoded in the trnK tRNA gene intron. Probably assists in splicing its own and other chloroplast group II introns. The sequence is that of Maturase K from Marathrum schiedeanum.